Reading from the N-terminus, the 399-residue chain is N-acetylglucosamine-6-phosphate deacetylase (399 aa).

Residues His65, His67, and Glu135 each coordinate a divalent metal cation. 146–147 (AH) contacts substrate. Residues His201 and His222 each contribute to the a divalent metal cation site. Substrate is bound by residues 225–226 (NG), Arg233, and 254–257 (DGHH). Asp279 provides a ligand contact to a divalent metal cation. Asp279 functions as the Proton donor/acceptor in the catalytic mechanism. Substrate is bound at residue 312 to 314 (LAG).

The protein belongs to the metallo-dependent hydrolases superfamily. NagA family. In terms of assembly, homodimer. A divalent metal cation serves as cofactor.

The catalysed reaction is N-acetyl-D-glucosamine 6-phosphate + H2O = D-glucosamine 6-phosphate + acetate. It participates in amino-sugar metabolism; N-acetylneuraminate degradation; D-fructose 6-phosphate from N-acetylneuraminate: step 4/5. Involved in the first committed step in the biosynthesis of amino-sugar-nucleotides. Catalyzes the hydrolysis of the N-acetyl group of N-acetylglucosamine-6-phosphate (GlcNAc-6-P) to yield glucosamine 6-phosphate and acetate. This chain is N-acetylglucosamine-6-phosphate deacetylase (manD), found in Vibrio furnissii.